A 1481-amino-acid chain; its full sequence is Cystic fibrosis transmembrane conductance regulator (1481 aa).

The Cytoplasmic segment spans residues 1–77; sequence MQRSPLEKAS…KLINALRRCF (77 aa). Residues 78–98 traverse the membrane as a helical segment; sequence FWRFMFYGILLYLGEVTKAVQ. Residues 81 to 365 form the ABC transmembrane type-1 1 domain; sequence FMFYGILLYL…WAVQTWYDSL (285 aa). Topologically, residues 99–122 are extracellular; it reads PLLLGRIIASYDPDNKEERSIAIY. The helical transmembrane segment at 123 to 146 threads the bilayer; sequence LGIGLCLLFIVRTLLLHPAIFGLH. Over 147–195 the chain is Cytoplasmic; that stretch reads HIGMQMRIAMFSLIYKKTLKLSSRVLDKISIGQLVSLLSNNLNKFDEGL. The chain crosses the membrane as a helical span at residues 196-216; that stretch reads ALAHFVWIVPLQVALLMGLIW. At 217–222 the chain is on the extracellular side; the sequence is ELLQAS. Residues 223–243 form a helical membrane-spanning segment; that stretch reads AFCGLGFLIVLALFQAGLGRM. Residues 244-298 lie on the Cytoplasmic side of the membrane; that stretch reads MMKYRDQRAGKINERLVITSEMIENIQSVKAYCWEEAMEKMIENLRQTELKLTRK. A helical transmembrane segment spans residues 299–319; sequence AAYVRYFNSSAFFFSGFFVVF. At 320 to 339 the chain is on the extracellular side; that stretch reads LSVLPYALIKGIVLRKIFTT. A helical membrane pass occupies residues 340 to 358; the sequence is ISFCIVLRMAVTRQFPWAV. Over 359–858 the chain is Cytoplasmic; it reads QTWYDSLGAI…YLRYITVHKS (500 aa). ATP is bound by residues tryptophan 401, serine 434, 458–465, and glutamine 493; that span reads GSTGAGKT. The 224-residue stretch at 423–646 folds into the ABC transporter 1 domain; the sequence is NDDDSLFFSN…RPDFSSKLMG (224 aa). Cysteine 524 is lipidated: S-palmitoyl cysteine. A phosphoserine mark is found at serine 549 and serine 660. Residues 654 to 831 form a disordered R region region; the sequence is SAERRNSILT…EEINEEDLKE (178 aa). Serine 670 is modified (phosphoserine; by PKA). Serine 686 is modified (phosphoserine). Lysine 688 is covalently cross-linked (Glycyl lysine isopeptide (Lys-Gly) (interchain with G-Cter in ubiquitin)). Phosphoserine is present on residues serine 700 and serine 712. Position 717 is a phosphothreonine (threonine 717). Residues serine 737, serine 753, serine 768, serine 790, serine 795, and serine 813 each carry the phosphoserine modification. The helical transmembrane segment at 859-879 threads the bilayer; it reads LIFVLIWCLVIFLAEVAASLV. The 297-residue stretch at 859–1155 folds into the ABC transmembrane type-1 2 domain; the sequence is LIFVLIWCLV…AVNSSIDVDS (297 aa). Over 880-918 the chain is Extracellular; sequence VLWFLGNTPPQDKGNSTYSRNNSYAVIITRTSSYYVFYI. Asparagine 894 and asparagine 900 each carry an N-linked (GlcNAc...) asparagine glycan. The chain crosses the membrane as a discontinuously helical span at residues 919 to 939; it reads YVGVADTLLAMGFFRGLPLVH. Residues 940-990 are Cytoplasmic-facing; that stretch reads TLITVSKILHHKMLHSVLQAPMSTLNTLKAGGILNRFSKDIAILDDLLPLT. Residues 991-1011 traverse the membrane as a helical segment; sequence IFDFIQLLLIVIGAIAVVAVL. The Extracellular portion of the chain corresponds to 1012–1013; that stretch reads QP. The helical transmembrane segment at 1014–1034 threads the bilayer; the sequence is YIFVATVPVIVAFIMLRAYFL. The Cytoplasmic segment spans residues 1035-1095; the sequence is QTSQQLKQLE…TANWFLYLST (61 aa). Residues 1096–1116 form a helical membrane-spanning segment; the sequence is LRWFQMRIEMIFVIFFIAVTF. The Extracellular portion of the chain corresponds to 1117–1130; it reads ISILTTGEGEGTVG. The helical transmembrane segment at 1131 to 1151 threads the bilayer; it reads IILTLAMNIMSTLQWAVNSSI. The Cytoplasmic segment spans residues 1152–1481; that stretch reads DVDSLMRSVS…TEEEVQDTRL (330 aa). An ABC transporter 2 domain is found at 1211 to 1444; the sequence is MTVKDLTAKY…RSLFRQAISP (234 aa). Residues tyrosine 1220 and 1245 to 1252 contribute to the ATP site; that span reads GRTGSGKS. The interval 1387 to 1481 is interaction with GORASP2; sequence RTLKQAFADC…TEEEVQDTRL (95 aa). Cysteine 1396 carries the S-palmitoyl cysteine lipid modification. Serine 1445 and serine 1457 each carry phosphoserine. A disordered region spans residues 1462–1481; sequence QPQIAALKEETEEEVQDTRL. Residues 1471–1481 are compositionally biased toward acidic residues; it reads ETEEEVQDTRL. The PDZ-binding signature appears at 1479–1481; it reads TRL.

This sequence belongs to the ABC transporter superfamily. ABCC family. CFTR transporter (TC 3.A.1.202) subfamily. As to quaternary structure, monomer; does not require oligomerization for channel activity. May form oligomers in the membrane. Interacts with SLC26A3, SLC26A6 and NHERF1. Interacts with SHANK2. Interacts with MYO6. Interacts (via C-terminus) with GOPC (via PDZ domain); this promotes CFTR internalization and thereby decreases channel activity. Interacts with SLC4A7 through NHERF1. Found in a complex with MYO5B and RAB11A. Interacts with ANO1. Interacts with SLC26A8. Interacts with AHCYL1; the interaction increases CFTR activity. Interacts with CSE1L. The core-glycosylated form interacts with GORASP2 (via PDZ GRASP-type 1 domain) in respone to ER stress. Interacts with MARCHF2; the interaction leads to CFTR ubiqtuitination and degradation. Interacts with ADGRG2. In terms of processing, N-glycosylated. Phosphorylated; cAMP treatment promotes phosphorylation and activates the channel. Dephosphorylation decreases the ATPase activity (in vitro). Phosphorylation at PKA sites activates the channel. Phosphorylation at PKC sites enhances the response to phosphorylation by PKA. Phosphorylated by AMPK; this inhibits channel activity. Post-translationally, ubiquitinated, leading to its degradation in the lysosome. Deubiquitination by USP10 in early endosomes enhances its endocytic recycling to the cell membrane. Ubiquitinated by RNF185 during ER stress. Ubiquitinated by MARCHF2.

It localises to the apical cell membrane. The protein resides in the early endosome membrane. The protein localises to the cell membrane. It is found in the recycling endosome membrane. Its subcellular location is the endoplasmic reticulum membrane. It localises to the nucleus. The catalysed reaction is ATP + H2O + closed Cl(-) channel = ADP + phosphate + open Cl(-) channel.. The enzyme catalyses chloride(in) = chloride(out). It carries out the reaction hydrogencarbonate(in) = hydrogencarbonate(out). It catalyses the reaction ATP + H2O = ADP + phosphate + H(+). Its function is as follows. Epithelial ion channel that plays an important role in the regulation of epithelial ion and water transport and fluid homeostasis. Mediates the transport of chloride ions across the cell membrane. Possesses an intrinsic ATPase activity and utilizes ATP to gate its channel; the passive flow of anions through the channel is gated by cycles of ATP binding and hydrolysis by the ATP-binding domains. The ion channel is also permeable to HCO(3)(-); selectivity depends on the extracellular chloride concentration. Exerts its function also by modulating the activity of other ion channels and transporters. Contributes to the regulation of the pH and the ion content of the epithelial fluid layer. Modulates the activity of the epithelial sodium channel (ENaC) complex, in part by regulating the cell surface expression of the ENaC complex. May regulate bicarbonate secretion and salvage in epithelial cells by regulating the transporter SLC4A7. Can inhibit the chloride channel activity of ANO1. Plays a role in the chloride and bicarbonate homeostasis during sperm epididymal maturation and capacitation. This Papio anubis (Olive baboon) protein is Cystic fibrosis transmembrane conductance regulator.